We begin with the raw amino-acid sequence, 539 residues long: Phosphoenolpyruvate carboxykinase (ATP) (539 aa).

Residues Arg64, Tyr206, and Lys212 each contribute to the substrate site. ATP-binding positions include Lys212, His231, and 247 to 255; that span reads GLSGTGKTT. Residues Lys212 and His231 each contribute to the Mn(2+) site. Asp268 contributes to the Mn(2+) binding site. Residues Glu296, Arg332, 448-449, and Thr454 each bind ATP; that span reads RI. Arg332 lines the substrate pocket.

This sequence belongs to the phosphoenolpyruvate carboxykinase (ATP) family. Monomer. The cofactor is Mn(2+).

Its subcellular location is the cytoplasm. The catalysed reaction is oxaloacetate + ATP = phosphoenolpyruvate + ADP + CO2. It functions in the pathway carbohydrate biosynthesis; gluconeogenesis. Involved in the gluconeogenesis. Catalyzes the conversion of oxaloacetate (OAA) to phosphoenolpyruvate (PEP) through direct phosphoryl transfer between the nucleoside triphosphate and OAA. This is Phosphoenolpyruvate carboxykinase (ATP) from Salmonella gallinarum (strain 287/91 / NCTC 13346).